Here is a 234-residue protein sequence, read N- to C-terminus: Ribose-5-phosphate isomerase A (234 aa).

Substrate is bound by residues 35-38 (SGTT), 91-94 (DGAD), and 105-108 (KGGG). Catalysis depends on E114, which acts as the Proton acceptor. K132 serves as a coordination point for substrate.

Belongs to the ribose 5-phosphate isomerase family. As to quaternary structure, homodimer.

The enzyme catalyses aldehydo-D-ribose 5-phosphate = D-ribulose 5-phosphate. The protein operates within carbohydrate degradation; pentose phosphate pathway; D-ribose 5-phosphate from D-ribulose 5-phosphate (non-oxidative stage): step 1/1. Its function is as follows. Catalyzes the reversible conversion of ribose-5-phosphate to ribulose 5-phosphate. The chain is Ribose-5-phosphate isomerase A from Methanococcus aeolicus (strain ATCC BAA-1280 / DSM 17508 / OCM 812 / Nankai-3).